The sequence spans 463 residues: MSNDVDDESKIETKSYEAKDIVYKSKVFAFKDGEYRKAEILMIQKRTRGVVYYVHYNDYNKRLDEWITIDNIDLSKGIEYPPPEKPKKAHGKGKSSKRPKAVDRRRSITAPSKTEPSTPSTEKPEPSTPSGESDHGSNAGNESLPLLEEDHKPESLSKEQEVERLRFSGSMVQNPHEIARIRNINKICIGDHEIEPWYFSPYPKEFSEVDIVYICSFCFCYYGSERQFQRHREKCTLQHPPGNEIYRDDYISFFEIDGRKQRTWCRNICLLSKLFLDHKMLYYDVDPFLFYCMCRRDEYGCHLVGYFSKEKESSENYNLACILTLPQYQRHGYGKLLIQFSYELTKREHKHGSPEKPLSDLGLISYRAYWAEQIINLVLGMRTETTIDELANKTSMTTNDVLHTLQALNMLKYYKGQFIICISDGIEQQYERLKNKKRRRINGDLLADWQPPVFHPSQLRFGW.

Residues 22-74 (VYKSKVFAFKDGEYRKAEILMIQKRTRGVVYYVHYNDYNKRLDEWITIDNIDL) enclose the Tudor-knot domain. Residues 76-145 (KGIEYPPPEK…GSNAGNESLP (70 aa)) are disordered. A compositionally biased stretch (basic residues) spans 87-99 (KKAHGKGKSSKRP). Positions 111–121 (PSKTEPSTPST) are enriched in low complexity. The MYST-type HAT domain occupies 179–451 (ARIRNINKIC…NGDLLADWQP (273 aa)). A C2HC MYST-type zinc finger spans residues 212 to 237 (VYICSFCFCYYGSERQFQRHREKCTL). Positions 262 to 283 (RTWCRNICLLSKLFLDHKMLYY) match the ESA1-RPD3 motif motif. An N6-acetyllysine; by autocatalysis modification is found at lysine 279. Residues 320-324 (ACILT) and 329-335 (QRHGYGK) each bind acetyl-CoA. The active-site Proton donor/acceptor is the glutamate 355. Serine 359 contributes to the acetyl-CoA binding site.

This sequence belongs to the MYST (SAS/MOZ) family. As to quaternary structure, component of the NuA4 histone acetyltransferase complex. Interacts with arp4. Post-translationally, autoacetylation at Lys-279 is required for proper function.

It is found in the nucleus. It localises to the chromosome. The enzyme catalyses L-lysyl-[histone] + acetyl-CoA = N(6)-acetyl-L-lysyl-[histone] + CoA + H(+). The catalysed reaction is L-lysyl-[protein] + acetyl-CoA = N(6)-acetyl-L-lysyl-[protein] + CoA + H(+). It carries out the reaction 2-hydroxyisobutanoyl-CoA + L-lysyl-[protein] = N(6)-(2-hydroxyisobutanoyl)-L-lysyl-[protein] + CoA + H(+). It catalyses the reaction (2E)-butenoyl-CoA + L-lysyl-[protein] = N(6)-(2E)-butenoyl-L-lysyl-[protein] + CoA + H(+). In terms of biological role, catalytic component of the NuA4 histone acetyltransferase (HAT) complex which is involved in epigenetic transcriptional activation of selected genes principally by acetylation of nucleosomal histones H4, H3, H2B, H2A and H2A variant H2A.Z. Acetylates histone H4 to form H4K5ac, H4K8ac, H4K12ac and H4K16ac, histone H3 to form H3K14ac, and histone H2A to form H2AK4ac and H2AK7ac. The NuA4 complex is involved in the DNA damage response and is required for chromosome segregation. The NuA4 complex plays a direct role in repair of DNA double-strand breaks (DSBs) through homologous recombination. Recruitment to promoters depends on H3K4me. Also acetylates non-histone proteins. In addition to protein acetyltransferase, can use different acyl-CoA substrates, such as 2-hydroxyisobutanoyl-CoA (2-hydroxyisobutyryl-CoA) or (2E)-butenoyl-CoA (crotonyl-CoA), and is able to mediate protein 2-hydroxyisobutyrylation and crotonylation, respectively. The protein is Histone acetyltransferase mst1 of Schizosaccharomyces pombe (strain 972 / ATCC 24843) (Fission yeast).